The sequence spans 256 residues: Non-structural protein 1 (256 aa).

Its subcellular location is the host cytoplasm. The protein localises to the host perinuclear region. Functionally, plays a role in inhibition of the host innate immune system by counteracting the type I interferon signaling. The chain is Non-structural protein 1 from Infectious salmon anemia virus (isolate Atlantic salmon/Norway/810/9/99) (ISAV).